Reading from the N-terminus, the 109-residue chain is MKRHSTLFLFTLLTLTTVPAQADIIDDTIGNIQQAINDASNPDRGRDYEDSRDDGWQREVSDDRRRQYDDRRRQFEDRRRQLDDRQHQLNQERRQLEDEERRMEDEYGQ.

Residues 1-22 (MKRHSTLFLFTLLTLTTVPAQA) form the signal peptide. The tract at residues 36 to 109 (INDASNPDRG…ERRMEDEYGQ (74 aa)) is disordered. The segment covering 41 to 109 (NPDRGRDYED…ERRMEDEYGQ (69 aa)) has biased composition (basic and acidic residues).

This is an uncharacterized protein from Escherichia coli O157:H7.